Here is an 82-residue protein sequence, read N- to C-terminus: Small ribosomal subunit protein bS16 (82 aa).

This sequence belongs to the bacterial ribosomal protein bS16 family.

The chain is Small ribosomal subunit protein bS16 from Tolumonas auensis (strain DSM 9187 / NBRC 110442 / TA 4).